Consider the following 617-residue polypeptide: Probable Xaa-Pro aminopeptidase P (617 aa).

Residues Asp-414, Asp-425, Glu-523, and Glu-537 each contribute to the Mn(2+) site.

The protein belongs to the peptidase M24B family. The cofactor is Mn(2+).

It carries out the reaction Release of any N-terminal amino acid, including proline, that is linked to proline, even from a dipeptide or tripeptide.. In terms of biological role, catalyzes the removal of a penultimate prolyl residue from the N-termini of peptides. The protein is Probable Xaa-Pro aminopeptidase P (AMPP) of Ajellomyces capsulatus (strain NAm1 / WU24) (Darling's disease fungus).